A 555-amino-acid chain; its full sequence is MQAVANKPVAELVDYRTEPSKYRHWSLATDGEIATLTLNIDEDGGIRPGYKLKLNSYDLGVDIELHDALQRVRFEHPEVRTVVVTSGKPKIFCSGANIYMLGLSTHAWKVNFCKFTNETRNGIEDSSQYSGLKFLAACNGTTAGGGYELALACDEIVLVDDRNSSVSLPEVPLLGVLPGTGGLTRVTDKRRVRRDHADIFCTISEGVRGQRAKDWRLVDDVVKQQQFAEHIQARAKALAQTSDRPAGAKGVKLTTLERTVDEKGYHYEFVDATIDADGRTVTLTVRAPAAVTAKTAAEIEAQGIKWWPLQMARELDDAILNLRTNHLDVGLWQLRTEGDAQVVLDIDATIDANRDNWFVRETIGMLRRTLARIDVSSRSLYALIEPGSCFAGTLLEIALAADRSYMLDAAEAKNVVGLSAMNFGTFPMVNGLSRIDARFYQEEAPVAAVKAKQGSLLSPAEAMELGLVTAIPDDLDWAEEVRIAIEERAALSPDALTGLEANLRFGPVETMNTRIFGRLSAWQNWIFNRPNAVGENGALKLFGSGKKAQFDWNRV.

It belongs to the benzoyl-CoA oxygenase component C family. Homodimer.

The enzyme catalyses 2,3-epoxy-2,3-dihydrobenzoyl-CoA + 2 H2O = (3Z)-6-oxohex-3-enoyl-CoA + formate + H(+). Functionally, catalyzes the ring opening of 2,3-epoxy-2,3-dihydroxybenzoyl-CoA to form 3,4-didehydroadipyl-CoA semialdehyde. The chain is Benzoyl-CoA-dihydrodiol lyase (boxC) from Aromatoleum evansii (Azoarcus evansii).